Here is an 80-residue protein sequence, read N- to C-terminus: Putative membrane protein insertion efficiency factor (80 aa).

Residues 61–80 (KTGKDPIPDHFSLKRNQEGE) are disordered. Residues 62–80 (TGKDPIPDHFSLKRNQEGE) are compositionally biased toward basic and acidic residues.

The protein belongs to the UPF0161 family.

It is found in the cell membrane. Its function is as follows. Could be involved in insertion of integral membrane proteins into the membrane. This is Putative membrane protein insertion efficiency factor from Streptococcus pneumoniae (strain CGSP14).